We begin with the raw amino-acid sequence, 256 residues long: 3-hydroxy-5-phosphonooxypentane-2,4-dione thiolase (256 aa).

K168 functions as the Schiff-base intermediate with substrate in the catalytic mechanism.

It belongs to the DeoC/FbaB aldolase family. Homodecamer.

The protein resides in the cytoplasm. It catalyses the reaction dihydroxyacetone phosphate + acetyl-CoA = 3-hydroxy-2,4-dioxopentyl phosphate + CoA. Involved in the degradation of phospho-AI-2, thereby terminating induction of the lsr operon and closing the AI-2 signaling cycle. Catalyzes the transfer of an acetyl moiety from 3-hydroxy-5-phosphonooxypentane-2,4-dione to CoA to form glycerone phosphate and acetyl-CoA. The chain is 3-hydroxy-5-phosphonooxypentane-2,4-dione thiolase (lsrF) from Shigella flexneri.